The following is a 94-amino-acid chain: Aspartyl/glutamyl-tRNA(Asn/Gln) amidotransferase subunit C (94 aa).

Belongs to the GatC family. In terms of assembly, heterotrimer of A, B and C subunits.

The enzyme catalyses L-glutamyl-tRNA(Gln) + L-glutamine + ATP + H2O = L-glutaminyl-tRNA(Gln) + L-glutamate + ADP + phosphate + H(+). It carries out the reaction L-aspartyl-tRNA(Asn) + L-glutamine + ATP + H2O = L-asparaginyl-tRNA(Asn) + L-glutamate + ADP + phosphate + 2 H(+). Its function is as follows. Allows the formation of correctly charged Asn-tRNA(Asn) or Gln-tRNA(Gln) through the transamidation of misacylated Asp-tRNA(Asn) or Glu-tRNA(Gln) in organisms which lack either or both of asparaginyl-tRNA or glutaminyl-tRNA synthetases. The reaction takes place in the presence of glutamine and ATP through an activated phospho-Asp-tRNA(Asn) or phospho-Glu-tRNA(Gln). The sequence is that of Aspartyl/glutamyl-tRNA(Asn/Gln) amidotransferase subunit C from Hydrogenobaculum sp. (strain Y04AAS1).